The primary structure comprises 260 residues: Putative methylesterase 19 (260 aa).

The active-site Acyl-ester intermediate is the Ser81. Residues Asp210 and His238 each act as charge relay system in the active site.

The protein belongs to the AB hydrolase superfamily. Methylesterase family.

Putative methylesterase. The sequence is that of Putative methylesterase 19 from Arabidopsis thaliana (Mouse-ear cress).